A 1032-amino-acid polypeptide reads, in one-letter code: MLQQPTISRFFKSSSTRKKSEQRTAKEEAELMQLLESDGENNSATVPSDRKPEAAPMHVGLGNKAAAGGAVPGQVKSATRGFEDFRFNRRREACGKEQEVGFAERLQRIMERREGGCVEEDETELDNEAPRSKRAKPNRLTELDQQFKDLKLQHMDKVLAVRVGYKYKFFAEDAVMVSRVLQIKLVPGKLTVHETDPADHKHKKFAYCTIPDTRLEVHLQRLMHHNLKVGVVEQTETSAVKKNSGTSSSVFSREVTNIFTRATYGINETFGTKDRRVLGDSASVWGLVCKRQPSYTRYFLVSVNLNSGEVIFDDFKEERFLTEALETRIKYTNPSEVVVGDGLGSEIEKVFHTSDSDITLNRIELVGLYEEIFSEPHPAFKGNVPLQTALMLVHGYLTNFKNESLLFFKENFKPFCSKTHMILPSSAIESLDIFENSTDRSSKGSLLWVLDHTRTNYGLRNLKNWIAKPLINIDQIQQRLDAVQCISTEVGNIFIESLNNMLRDGQDLERILNRIAYGKTSRREVYLFLRELTQLATLFSSHHRYIETNVLSANGKIRMQSSLLANIFTDLDEYWKQFPIPNFLAMINIDAALDKNPDRPYVEYFNLTKYDRAEPLISKQQDIEAVIGELRDELKNIRVILKRPMLNYKDEIDFLVEIRNTQVSSVPVDWVKVASTKAVSRFQTPGTAKLVAKLQYHKELLQDLALQEYESFIKRITGEYTSLRKAILHLSTYDCILSLAATSCNVDYVRPKFNTAPQCINVINGRNPIIESLDVRYMPNDVNLNREGKKIMIITGPNMGGKSSYIRQVALLVIMAQIGCYVPAQEAEFSIFDQIFTRIGAYDNLLRNDSTFKIEMTEMVQILRSSTENSLLLLDEVGRGTGTHDGISISYALLRYFIELHNACPLILFITHYASLGSIRSPILGNYHMSYIEEKRPGENWPSVVFLYKLKEGRAHNSYGLNVAKLADIQTGIINRAYKISTMLKQEMESNSSIAAICTIKHALAGNSAASLKSAIETLIESADHEQFVLNM.

The interval 1–59 (MLQQPTISRFFKSSSTRKKSEQRTAKEEAELMQLLESDGENNSATVPSDRKPEAAPMHV) is disordered. A compositionally biased stretch (basic and acidic residues) spans 18 to 29 (KKSEQRTAKEEA). The tract at residues 136 to 262 (KPNRLTELDQ…REVTNIFTRA (127 aa)) is mispair-binding domain. 796–803 (GPNMGGKS) provides a ligand contact to ATP.

Belongs to the DNA mismatch repair MutS family. MSH3 subfamily. Heterodimer consisting of MSH2-MSH3 (MutS beta). Forms a ternary complex with MutL alpha (MLH1-PMS1).

It is found in the nucleus. Its function is as follows. Component of the post-replicative DNA mismatch repair system (MMR). Heterodimerizes with MSH2 to form MutS beta, which binds to DNA mismatches thereby initiating DNA repair. MSH3 provides substrate-binding and substrate specificity to the complex. When bound, the MutS beta heterodimer bends the DNA helix and shields approximately 20 base pairs. Acts mainly to repair insertion-deletion loops (IDLs) from 2 to 13 nucleotides in size, but can also repair base-base and single insertion-deletion mismatches that occur during replication. After mismatch binding, forms a ternary complex with the MutL alpha heterodimer, which is thought to be responsible for directing the downstream MMR events, including strand discrimination, excision, and resynthesis. ATP binding and hydrolysis play a pivotal role in mismatch repair functions. This is DNA mismatch repair protein MSH3 (MSH3) from Eremothecium gossypii (strain ATCC 10895 / CBS 109.51 / FGSC 9923 / NRRL Y-1056) (Yeast).